We begin with the raw amino-acid sequence, 400 residues long: Haptoglobin (400 aa).

The N-terminal stretch at 1–18 (MSALPVVVTLLLCGQLLA) is a signal peptide. Sushi domains follow at residues 28 to 83 (DSCP…ECED) and 84 to 141 (ASCP…ECEA). 3 disulfides stabilise this stretch: Cys-49–Cys-81, Cys-105–Cys-139, and Cys-143–Cys-260. A Peptidase S1 domain is found at 156–398 (IIGGSLDAKG…ILDWVRKTIA (243 aa)). N-linked (GlcNAc...) asparagine glycosylation is found at Asn-285, Asn-309, and Asn-315. Disulfide bonds link Cys-303/Cys-334 and Cys-345/Cys-375. The tract at residues 312–317 (VPENKT) is interaction with CD163.

It belongs to the peptidase S1 family. As to quaternary structure, tetramer of two alpha and two beta chains; disulfide-linked. The hemoglobin/haptoglobin complex is composed of a haptoglobin dimer bound to two hemoglobin alpha-beta dimers. Interacts with CD163. Interacts with ERGIC3. In terms of tissue distribution, expressed by the liver and secreted in plasma.

Its subcellular location is the secreted. It is found in the extracellular space. As a result of hemolysis, hemoglobin is found to accumulate in the kidney and is secreted in the urine. Haptoglobin captures, and combines with free plasma hemoglobin to allow hepatic recycling of heme iron and to prevent kidney damage. Haptoglobin also acts as an antioxidant, has antibacterial activity and plays a role in modulating many aspects of the acute phase response. Hemoglobin/haptoglobin complexes are rapidly cleared by the macrophage CD163 scavenger receptor expressed on the surface of liver Kupfer cells through an endocytic lysosomal degradation pathway. The chain is Haptoglobin (HP) from Cervus elaphus (Red deer).